A 110-amino-acid chain; its full sequence is MPNKVHVKKGDTVVVISGKYKGKQGKVLTVLPKDKKVVVEGVNIVKKHVRPNPKMPQGGIITQEAPIWACKVMLVCPKCNKPTRIGHRFIQEGEEEKKVRTCKKCGEIID.

It belongs to the universal ribosomal protein uL24 family. In terms of assembly, part of the 50S ribosomal subunit.

Its function is as follows. One of two assembly initiator proteins, it binds directly to the 5'-end of the 23S rRNA, where it nucleates assembly of the 50S subunit. In terms of biological role, one of the proteins that surrounds the polypeptide exit tunnel on the outside of the subunit. The protein is Large ribosomal subunit protein uL24 of Caldicellulosiruptor saccharolyticus (strain ATCC 43494 / DSM 8903 / Tp8T 6331).